A 2059-amino-acid chain; its full sequence is Desmoplakin-A (2059 aa).

Residues 1–11 (MSLSGSQTRLH) are compositionally biased toward polar residues. The tract at residues 1-25 (MSLSGSQTRLHQISRRSSSRPDLTA) is disordered. Coiled-coil stretches lie at residues 320 to 354 (IPQKQESYSKLMSDLEEKEKELNKLKAKVDMLLKN) and 397 to 453 (FKEA…VQTL). Residues 665–690 (EVSSGKTATGVSSGKTATGVSSGKTS) are disordered. Residues 671-690 (TATGVSSGKTATGVSSGKTS) are compositionally biased toward low complexity. Coiled coils occupy residues 1062–1229 (MEEL…AELE) and 1261–1383 (LQQD…LQQR). Plectin repeat units lie at residues 1450–1488 (YLGGSDCIAGIYDEAKDRVMPFYQAMKDGLLRRGTTLEL), 1489–1526 (LEAQAASGFIIDPVNNVCMTVEEAWKRGLVGKEFKDKL), 1564–1602 (LLEAQIASGGIIDPKGSHRIDVEVAYRKGYFDREMNEIL), 1666–1694 (IVDPDTGKEMTVREAYHRELIDYDTFLEL), 1847–1885 (LLEAQVCSGGIINPATGQRLSLKDAVQQSLIDEDMSVKL), and 1923–1961 (FLEFQYLTGGLIEPGTGRRVSIEEAIRKGWLDGKGAQKL). A disordered region spans residues 2008 to 2059 (KGISSPYNVSSGPSSRSGSRAGSRTGSRSGSRRGSVDYSSSSVSYTFFSSAS). Over residues 2011–2059 (SSPYNVSSGPSSRSGSRAGSRTGSRSGSRRGSVDYSSSSVSYTFFSSAS) the composition is skewed to low complexity.

The protein belongs to the plakin or cytolinker family.

Its subcellular location is the cell junction. The protein resides in the desmosome. The protein localises to the cell membrane. Functionally, involved in the organization of desmosome cell-cell junctions. Of particular importance in cell adhesion in the skin and during cardiac development. May also play a role in the regulation of Wnt, TGF-beta and Hippo signaling pathways. The sequence is that of Desmoplakin-A from Danio rerio (Zebrafish).